A 292-amino-acid polypeptide reads, in one-letter code: Aquaporin-3 (292 aa).

At 1 to 24 (MGRQKELVNRCGEMLHIRYRLLRQ) the chain is on the cytoplasmic side. Residues 25-42 (ALAECLGTLILVMFGCGS) form a helical membrane-spanning segment. Residues 43–56 (VAQVVLSRGTHGGF) lie on the Extracellular side of the membrane. Residues 57-74 (LTINLAFGFAVTLGILIA) traverse the membrane as a helical segment. Over 75–78 (GQVS) the chain is Cytoplasmic. An intramembrane region (discontinuously helical) is located at residues 79 to 92 (GAHLNPAVTFAMCF). Positions 83-85 (NPA) match the NPA 1 motif. Over 93–100 (LAREPWIK) the chain is Cytoplasmic. The helical transmembrane segment at 101–121 (LPVYTLAQTLGAFLGAGIIFG) threads the bilayer. At 122-159 (LYYDAIWAFANNQLIVSGPNGTAGIFATYPSGHLDMVN) the chain is on the extracellular side. A glycan (N-linked (GlcNAc...) asparagine) is linked at asparagine 141. A helical transmembrane segment spans residues 160–177 (GFFDQFIGTASLIVCVLA). The Cytoplasmic segment spans residues 178 to 189 (IVDPYNNPVPRG). Residues 190–206 (LEAFTVGLVVLVIGTSM) form a helical membrane-spanning segment. At 207–210 (GFNS) the chain is on the extracellular side. The segment at residues 211-224 (GYAVNPARDFGPRL) is an intramembrane region (discontinuously helical). Residues 215–217 (NPA) carry the NPA 2 motif. The Extracellular portion of the chain corresponds to 225–242 (FTAIAGWGSEVFTTGRHW). The helical transmembrane segment at 243–264 (WWVPIVSPLLGSIAGVFVYQLM) threads the bilayer. Topologically, residues 265–292 (IGCHLEPPPPSTDEENVKLSHVKHKEQM) are cytoplasmic.

Belongs to the MIP/aquaporin (TC 1.A.8) family. Homotetramer; each monomer provides an independent glycerol/water pore. Could also exist in other oligomeric states.

The protein resides in the cell membrane. The protein localises to the basolateral cell membrane. The enzyme catalyses glycerol(in) = glycerol(out). It catalyses the reaction H2O(in) = H2O(out). The catalysed reaction is urea(in) = urea(out). It carries out the reaction H2O2(out) = H2O2(in). Functionally, aquaglyceroporins form homotetrameric transmembrane channels, with each monomer independently mediating glycerol and water transport across the plasma membrane along their osmotic gradient. Could also be permeable to urea. Also participates in cell permeability to H2O2 and H2O2-mediated signaling. In skin, transports glycerol to the epidermis and stratum corneum, where it maintains hydration, elasticity, and supports lipid biosynthesis for barrier repair. In kidney, contributes to the reabsorption of water, helping the body maintain proper fluid balance. In Bos taurus (Bovine), this protein is Aquaporin-3.